Here is a 1024-residue protein sequence, read N- to C-terminus: Error-prone DNA polymerase (1024 aa).

This sequence belongs to the DNA polymerase type-C family. DnaE2 subfamily.

The protein resides in the cytoplasm. The enzyme catalyses DNA(n) + a 2'-deoxyribonucleoside 5'-triphosphate = DNA(n+1) + diphosphate. Functionally, DNA polymerase involved in damage-induced mutagenesis and translesion synthesis (TLS). It is not the major replicative DNA polymerase. This is Error-prone DNA polymerase from Vibrio vulnificus (strain YJ016).